The sequence spans 255 residues: Probable membrane transporter protein HI_0198 (255 aa).

8 consecutive transmembrane segments (helical) span residues 7-27 (LLAI…IAGG), 28-48 (GGLI…MALG), 76-96 (IWFI…LIQS), 99-119 (VAIF…YFLF), 132-152 (LSYL…DGFF), 153-173 (GPGT…FNLP), 191-211 (FALF…MMAG), and 235-255 (VVIM…WFHF).

It belongs to the 4-toluene sulfonate uptake permease (TSUP) (TC 2.A.102) family.

The protein resides in the cell membrane. The polypeptide is Probable membrane transporter protein HI_0198 (Haemophilus influenzae (strain ATCC 51907 / DSM 11121 / KW20 / Rd)).